Consider the following 721-residue polypeptide: Dipeptidyl-peptidase 5 (721 aa).

The N-terminal stretch at 1-18 (MGAFRWLSIAAAASTALA) is a signal peptide. Asn-75, Asn-94, Asn-151, and Asn-254 each carry an N-linked (GlcNAc...) asparagine glycan. The disordered stretch occupies residues 271–297 (ARPINGPDSPGTPKGIKGDSSSPVFSP). 2 N-linked (GlcNAc...) asparagine glycosylation sites follow: Asn-380 and Asn-450. Ser-560 serves as the catalytic Charge relay system. Asn-607 is a glycosylation site (N-linked (GlcNAc...) asparagine). Active-site charge relay system residues include Asp-643 and His-675.

It belongs to the peptidase S9C family. Post-translationally, N-glycosylated. Expressed in mycelia and conidia.

It is found in the secreted. Functionally, may be involved in metabolism of dipeptides or may affect host defense mechanisms. Has a substrate specificity limited to the hydrolysis of X-Ala, His-Ser, and Ser-Tyr dipeptides at a neutral pH optimum. This is Dipeptidyl-peptidase 5 from Aspergillus fumigatus (strain CBS 144.89 / FGSC A1163 / CEA10) (Neosartorya fumigata).